We begin with the raw amino-acid sequence, 139 residues long: Small ribosomal subunit protein uS12 (139 aa).

Positions 12-55 (RVDKVKKSDSPALNKGYNSFKKSQTDVSSPQKRGVCTRVGTMTP) are disordered. Residues 27-42 (GYNSFKKSQTDVSSPQ) are compositionally biased toward polar residues. Residue Asp-102 is modified to 3-methylthioaspartic acid. The disordered stretch occupies residues 119-139 (GVQNRMQGRSKYGTKKPKDKK). Residues 130–139 (YGTKKPKDKK) show a composition bias toward basic residues.

The protein belongs to the universal ribosomal protein uS12 family. In terms of assembly, part of the 30S ribosomal subunit. Contacts proteins S8 and S17. May interact with IF1 in the 30S initiation complex.

Functionally, with S4 and S5 plays an important role in translational accuracy. In terms of biological role, interacts with and stabilizes bases of the 16S rRNA that are involved in tRNA selection in the A site and with the mRNA backbone. Located at the interface of the 30S and 50S subunits, it traverses the body of the 30S subunit contacting proteins on the other side and probably holding the rRNA structure together. The combined cluster of proteins S8, S12 and S17 appears to hold together the shoulder and platform of the 30S subunit. In Shouchella clausii (strain KSM-K16) (Alkalihalobacillus clausii), this protein is Small ribosomal subunit protein uS12.